The chain runs to 949 residues: MQKIKSLMTRQGLRSPQESVHDLSPIENLRFPTKEELRESWEEPTDPQAQQEIINSIEEVYFSNDAFDIVKYELERLPPVLSLQELEEYRDKLKQQQAAELERVTSLQNGLQLAAVICADGRRHLNIAKEGFTQTSLGLLANQRKRQLLIGLLKSLRTIKTLQRTDVRLSEMLEEEDYPGAIQLCLECQKAASTFKHYSCISELNSKLQDTLEQIEEQLDVALSKICKNFDINHYTKVQQAYRLLGKTQTAMDQLHMHFTQAIHNTVFQVVLGYVELCAGNTDTKFQKLQYKDLCTHITSDSYIPCLADLCKALWEVMLSYYRTMQWHENHDQDEAATVSSVSDGSSVVGTEENSFDRSYVKKKLEHGLSRIWQDVQLKVKTYLLGTDLSNFKYDDFIFVLDVISRLMQVGEEFCGSKSEVLQESIRKQSVNYFKTYHRTRLEELRMFLENETWELCPVKSSFDILQLHEFKFMVQSRSPSVSPSKQPASAISTTVTLFEQYCNGGNPFEIQADSKDDETEDVLASNGYESDEQEKSAYQEYDSDSDVPEELKRDYVDEQTGDAPMKSVSRETLRSRKKSDYSLNKGNAPILTNTTLNVVRLVGKYMQMMNILKPIAFDVIHFMSQLFDYYLYAVYTFFGRNDTFESTGLGLSSSRLRTTLNRIQESLIDLEVSADPTGTLTAAEERKEKVPSPHLSHLVVLTSGSSLYGLAERVVATESLVFLAEQFEFLQPHLDAVMPAAKKPFLQQFYSQTVSTANELRKPVYWIVAAKAIDYEQMLLLMANVKWDVKEIMSQHNVYVDSLLKEFEEFNRRLNEVSKRVRIPLIVSNILWEHCMRLANRTLVEGYANVKKCSNEGRALMQLDFQQFLMKLEKLTDIRPIPDKEFVETYIKAYYLTENDMERWIKEHREYSTKHLTNLVNVCLGSHINKKARQKLLAAIDDIDRPKR.

The tract at residues 1-28 is disordered; sequence MQKIKSLMTRQGLRSPQESVHDLSPIEN. Over residues 8–18 the composition is skewed to polar residues; that stretch reads MTRQGLRSPQE. Coiled coils occupy residues 82–104 and 198–226; these read SLQE…LERV and YSCI…LSKI. Residues 509 to 581 form a disordered region; that stretch reads FEIQADSKDD…ETLRSRKKSD (73 aa). Over residues 569-581 the composition is skewed to basic and acidic residues; it reads VSRETLRSRKKSD.

Belongs to the syndetin family. Component of the endosome-associated retrograde protein (EARP) complex.

It is found in the recycling endosome. The protein resides in the membrane. Its function is as follows. Acts as a component of the EARP complex that is involved in endocytic recycling. The EARP complex associates with Rab4-positive endosomes and promotes recycling of internalized transferrin receptor (TFRC) to the plasma membrane. The polypeptide is Syndetin (Gallus gallus (Chicken)).